The primary structure comprises 92 residues: Acylphosphatase (92 aa).

A disulfide bond links cysteine 5 and cysteine 49. The region spanning 5–92 (CIIAWVYGRV…SGELTDFRIR (88 aa)) is the Acylphosphatase-like domain. Active-site residues include arginine 20 and asparagine 38.

It belongs to the acylphosphatase family.

The catalysed reaction is an acyl phosphate + H2O = a carboxylate + phosphate + H(+). This is Acylphosphatase from Escherichia coli O157:H7.